A 194-amino-acid chain; its full sequence is HTH-type transcriptional regulator BetI (194 aa).

In terms of domain architecture, HTH tetR-type spans 8-68; it reads PLRRRELIDA…ATMRHLLREL (61 aa). The segment at residues 31-50 is a DNA-binding region (H-T-H motif); the sequence is TVAQIAHEAGVSPALAHHYF.

It functions in the pathway amine and polyamine biosynthesis; betaine biosynthesis via choline pathway [regulation]. Repressor involved in the biosynthesis of the osmoprotectant glycine betaine. It represses transcription of the choline transporter BetT and the genes of BetAB involved in the synthesis of glycine betaine. The polypeptide is HTH-type transcriptional regulator BetI (Brucella anthropi (strain ATCC 49188 / DSM 6882 / CCUG 24695 / JCM 21032 / LMG 3331 / NBRC 15819 / NCTC 12168 / Alc 37) (Ochrobactrum anthropi)).